Reading from the N-terminus, the 610-residue chain is Zinc metalloproteinase-disintegrin-like VAP1 (610 aa).

An N-terminal signal peptide occupies residues 1-20 (MIQVLLVTISLAVFPYQGSS). A propeptide spanning residues 21–189 (VILESGNVND…KKASQSNLTP (169 aa)) is cleaved from the precursor. Position 190 is a pyrrolidone carboxylic acid (Glu) (Glu-190). One can recognise a Peptidase M12B domain in the interval 199-395 (KYVKLFLVAD…NMPQCILKKP (197 aa)). Asn-218 is a glycosylation site (N-linked (GlcNAc...) asparagine). 3 disulfide bridges follow: Cys-310–Cys-390, Cys-350–Cys-374, and Cys-352–Cys-357. His-335 lines the Zn(2+) pocket. Residues 335-346 (HEMGHNLGMDHD) carry the Metal-binding motif. Glu-336 (proton acceptor) is an active-site residue. Positions 339 and 345 each coordinate Zn(2+). Residues 403 to 488 (PAVCGNYFVE…AECTDRFQRN (86 aa)) enclose the Disintegrin domain. Ca(2+) is bound by residues Val-405, Asn-408, Phe-410, Glu-412, Glu-415, and Asp-418. Cystine bridges form between Cys-406–Cys-435, Cys-417–Cys-430, Cys-419–Cys-425, Cys-429–Cys-452, Cys-443–Cys-449, Cys-448–Cys-474, Cys-461–Cys-481, Cys-468–Cys-499, Cys-492–Cys-504, Cys-511–Cys-561, Cys-526–Cys-572, Cys-539–Cys-549, Cys-556–Cys-598, and Cys-592–Cys-603. Positions 467–469 (ECD) match the D/ECD-tripeptide motif. Ca(2+)-binding residues include Asp-469, Met-470, Asp-472, Asp-483, and Arg-484.

The protein belongs to the venom metalloproteinase (M12B) family. P-III subfamily. P-IIIc sub-subfamily. In terms of assembly, homodimer; disulfide-linked. Requires Zn(2+) as cofactor. In terms of processing, the N-terminus is blocked. As to expression, expressed by the venom gland.

It localises to the secreted. Its activity is regulated as follows. Inhibited by EDTA and EGTA, but not by PMSF. Zinc metalloprotease that has fibrinogenolytic and hemorrhagic activities. It induces apoptosis in vascular endothelial cells (VEC), without degrading extracellular matrix (it cannot cleave collagen) or inhibiting adhesion of VEC. VAP1-induced apoptosis is inhibited by antibodies for integrin alpha-3, alpha-6, beta-1 and CD9. Apoptosis is accompanied by severe cell fragmentation, which is controlled by caspases. The protein is Zinc metalloproteinase-disintegrin-like VAP1 of Crotalus atrox (Western diamondback rattlesnake).